Consider the following 441-residue polypeptide: Glutamate--tRNA ligase 2 (441 aa).

The 'HIGH' region signature appears at Pro9–Asn19. Residues Ala239–Arg243 carry the 'KMSKS' region motif. Lys242 is an ATP binding site.

Belongs to the class-I aminoacyl-tRNA synthetase family. Glutamate--tRNA ligase type 1 subfamily. As to quaternary structure, monomer.

The protein localises to the cytoplasm. It catalyses the reaction tRNA(Glu) + L-glutamate + ATP = L-glutamyl-tRNA(Glu) + AMP + diphosphate. Catalyzes the attachment of glutamate to tRNA(Glu) in a two-step reaction: glutamate is first activated by ATP to form Glu-AMP and then transferred to the acceptor end of tRNA(Glu). This chain is Glutamate--tRNA ligase 2, found in Cereibacter sphaeroides (strain ATCC 17023 / DSM 158 / JCM 6121 / CCUG 31486 / LMG 2827 / NBRC 12203 / NCIMB 8253 / ATH 2.4.1.) (Rhodobacter sphaeroides).